A 655-amino-acid chain; its full sequence is p-hydroxybenzoic acid efflux pump subunit AaeB (655 aa).

10 helical membrane-spanning segments follow: residues 13–33, 38–58, 69–89, 93–113, 121–141, 152–172, 370–390, 407–427, 431–451, and 482–502; these read FAVK…HFQL, WAVL…GGEP, LRII…IAMI, LLMI…SSLV, WGLA…EPLL, EIVI…PRSI, LFWL…IAVV, FIYG…VIIP, QSML…GIEV, and FLDS…VILL.

It belongs to the aromatic acid exporter ArAE (TC 2.A.85) family.

It localises to the cell inner membrane. In terms of biological role, forms an efflux pump with AaeA. Could function as a metabolic relief valve, allowing to eliminate certain compounds when they accumulate to high levels in the cell. The polypeptide is p-hydroxybenzoic acid efflux pump subunit AaeB (Shigella dysenteriae serotype 1 (strain Sd197)).